A 311-amino-acid polypeptide reads, in one-letter code: Malate dehydrogenase (311 aa).

NAD(+) is bound by residues 7-13 (GAAGGIG) and Asp-34. Positions 81 and 87 each coordinate substrate. NAD(+)-binding positions include Asn-94 and 117-119 (ITN). Positions 119 and 153 each coordinate substrate. His-177 acts as the Proton acceptor in catalysis. Residue Met-227 participates in NAD(+) binding.

The protein belongs to the LDH/MDH superfamily. MDH type 1 family. As to quaternary structure, homodimer.

It carries out the reaction (S)-malate + NAD(+) = oxaloacetate + NADH + H(+). Functionally, catalyzes the reversible oxidation of malate to oxaloacetate. The polypeptide is Malate dehydrogenase (Shewanella denitrificans (strain OS217 / ATCC BAA-1090 / DSM 15013)).